A 219-amino-acid chain; its full sequence is UPF0319 protein MS0844 (219 aa).

Positions 1-21 (MKFRLTALAVAALLTSTASFA) are cleaved as a signal peptide.

It belongs to the UPF0319 family.

The chain is UPF0319 protein MS0844 from Mannheimia succiniciproducens (strain KCTC 0769BP / MBEL55E).